The chain runs to 594 residues: Suppressor of hairless protein (594 aa).

Positions 20–87 (ETTVVNPNGS…QQQQQHQQQM (68 aa)) are disordered. A compositionally biased stretch (low complexity) spans 58–87 (QQQQQQLQVHHQQQQQQQQQQQQQQHQQQM). DNA-binding stretches follow at residues 131 to 141 (QKSYGNEKRFF), 239 to 244 (SKPSKK), and 266 to 271 (RLRSQT). An IPT/TIG domain is found at 429–519 (PIVNSLNLNG…YATGLTFTYT (91 aa)). Low complexity-rich tracts occupy residues 542–562 (NNNN…AGSP) and 569–580 (QQQQQQHQALPS). The disordered stretch occupies residues 542–594 (NNNNNITSISNNNNSNNAGSPAAGGGLQQQQQQHQALPSISEVQWNSHGSGLS). The span at 582-594 (SEVQWNSHGSGLS) shows a compositional bias: polar residues.

This sequence belongs to the Su(H) family. As to quaternary structure, interacts with activated cleaved Notch. Interacts with Hairless, this interaction preventing its DNA-binding activity. Interacts with insv (via BEN domain).

Its subcellular location is the nucleus. It is found in the cytoplasm. Its function is as follows. Transcriptional regulator that plays a central role in Notch signaling, a signaling pathway involved in cell-cell communication that regulates a broad spectrum of cell-fate determinations. Binds directly the 5'-GTGRGAR-3' DNA consensus sequence, which is present in the regulatory region of several genes. Acts as a transcriptional repressor when it is not associated with Notch proteins. When associated with some Notch protein, it acts as a transcriptional activator that activates transcription of Notch target genes. Required for transcription of Sim. Specifically binds to the immunoglobulin kappa-type J segment recombination signal sequence. Required for neurogenesis in imaginal disks. In the larval brain, might play a role as a transducer of Notch signaling during type II neuroblast development. Also functions independently of the Notch pathway, in the development of the bristle sensory organ precursor cell. This Drosophila melanogaster (Fruit fly) protein is Suppressor of hairless protein (Su(H)).